An 83-amino-acid polypeptide reads, in one-letter code: RNA-binding protein Hfq (83 aa).

In terms of domain architecture, Sm spans 10 to 70; sequence DAFLNQLRKE…ISTVSPSRPV (61 aa).

It belongs to the Hfq family. In terms of assembly, homohexamer.

In terms of biological role, RNA chaperone that binds small regulatory RNA (sRNAs) and mRNAs to facilitate mRNA translational regulation in response to envelope stress, environmental stress and changes in metabolite concentrations. Also binds with high specificity to tRNAs. The polypeptide is RNA-binding protein Hfq (Desulforudis audaxviator (strain MP104C)).